Here is a 303-residue protein sequence, read N- to C-terminus: Energy-coupling factor transporter ATP-binding protein EcfA2 (303 aa).

In terms of domain architecture, ABC transporter spans 17–260 (LSVSNLSCFF…EAFLAHTTII (244 aa)). 54-61 (GDSGSGKS) contributes to the ATP binding site.

The protein belongs to the ABC transporter superfamily. Energy-coupling factor EcfA family. Forms a stable energy-coupling factor (ECF) transporter complex composed of 2 membrane-embedded substrate-binding proteins (S component), 2 ATP-binding proteins (A component) and 2 transmembrane proteins (T component).

Its subcellular location is the cell membrane. ATP-binding (A) component of a common energy-coupling factor (ECF) ABC-transporter complex. Unlike classic ABC transporters this ECF transporter provides the energy necessary to transport a number of different substrates. This is Energy-coupling factor transporter ATP-binding protein EcfA2 from Mycoplasma pneumoniae (strain ATCC 29342 / M129 / Subtype 1) (Mycoplasmoides pneumoniae).